Here is a 635-residue protein sequence, read N- to C-terminus: Cerevisin (635 aa).

An N-terminal signal peptide occupies residues 1-19; the sequence is MKLENTLFTLGALGSISAA. Positions 20–280 are excised as a propeptide; that stretch reads LVIPNLENAA…VERDSIVEAT (261 aa). Composition is skewed to basic and acidic residues over residues 35-50, 74-85, 94-109, and 126-136; these read INKE…VEFT, KGQDKESPEFNG, SAHE…HESS, and GCHENKVEEKK. Positions 35-155 are disordered; sequence INKEDHHERP…KHHEKTLEKG (121 aa). Positions 137-155 are enriched in basic residues; sequence MKGKKVKGKKHHEKTLEKG. Residues 182 to 278 form the Inhibitor I9 domain; it reads RYIIVFKRGA…DFVERDSIVE (97 aa). A Peptidase S8 domain is found at 289–614; it reads PWGLARISHR…KQELNMDEFI (326 aa). Residues Asp-325 and His-357 each act as charge relay system in the active site. Cys-460 and Cys-491 form a disulfide bridge. The active-site Charge relay system is the Ser-519. A propeptide spanning residues 575 to 635 is cleaved from the precursor; it reads DTPNVLIYNG…RDILDKLNII (61 aa). Residue Asn-594 is glycosylated (N-linked (GlcNAc...) asparagine).

It belongs to the peptidase S8 family. In terms of processing, activated by N- and C-terminal proteolytic cleavage. Protease B (PrB/PRB1) processing requires at least 4 cleavages. First, the signal peptide is removed from the 76 kDa preproprotease B by signal peptidase in the ER. Then, PrB removes its own Pro-region (in trans) at the N-terminus, producing a 39 kDa form before exiting the ER. In the Golgi complex, the C-terminal Post-region of the 40 kDa proprotease B undergoes protease A (PrA/PEP4)-mediated processing to a 37 kDa intermediate, which in turn is quickly processed again by PrB in trans to yield the 31 kDa mature PrB. Post-translationally, glycosylated. Preproprotease B is a 76 kDa unglycosylated precursor that enters the endoplasmic reticulum (ER), where it receives one Asn-linked and an undetermined number of non-Asn-linked carbohydrate side chains. In the Golgi complex, the 39 kDa form becomes 40 kDa, due to elaboration of the Asn-linked side chain. The ultimate processing step removes a peptide containing the Asn-linked chain. Mature PrB has only non-Asn-linked carbohydrates.

It is found in the vacuole. It catalyses the reaction Hydrolysis of proteins with broad specificity, and of Bz-Arg-OEt &gt; Ac-Tyr-OEt. Does not hydrolyze peptide amides.. Its function is as follows. Vacuolar proteinase B involved in protein degradation in the vacuole. Among other substrates, acts on carboxypeptidase Y (cpY/PRC1) to activate it by processing its Pro-peptide. Required for meiosis and spore formation, and for optimal survival in stationary phase. This is Cerevisin (PRB1) from Saccharomyces cerevisiae (strain ATCC 204508 / S288c) (Baker's yeast).